We begin with the raw amino-acid sequence, 397 residues long: Riboflavin biosynthesis protein RibBA (397 aa).

Residues 1-199 form a DHBP synthase region; it reads MFHRIEEALE…IEDLIAYRRH (199 aa). Residues 26–27, Asp-31, 138–142, and Glu-162 each bind D-ribulose 5-phosphate; these read RE and RAGHT. Glu-27 lines the Mg(2+) pocket. A Mg(2+)-binding site is contributed by His-141. The tract at residues 200-397 is GTP cyclohydrolase II; that stretch reads HETLVTREVE…VNKLGHLLNL (198 aa). GTP is bound at residue 250-254; it reads RVHSE. 3 residues coordinate Zn(2+): Cys-255, Cys-266, and Cys-268. GTP is bound by residues Gln-271, 293-295, and Thr-315; that span reads EGR. Asp-327 functions as the Proton acceptor; for GTP cyclohydrolase activity in the catalytic mechanism. Residue Arg-329 is the Nucleophile; for GTP cyclohydrolase activity of the active site. Positions 350 and 355 each coordinate GTP.

The protein in the N-terminal section; belongs to the DHBP synthase family. This sequence in the C-terminal section; belongs to the GTP cyclohydrolase II family. It depends on Mg(2+) as a cofactor. Requires Mn(2+) as cofactor. Zn(2+) serves as cofactor.

It catalyses the reaction D-ribulose 5-phosphate = (2S)-2-hydroxy-3-oxobutyl phosphate + formate + H(+). It carries out the reaction GTP + 4 H2O = 2,5-diamino-6-hydroxy-4-(5-phosphoribosylamino)-pyrimidine + formate + 2 phosphate + 3 H(+). The protein operates within cofactor biosynthesis; riboflavin biosynthesis; 2-hydroxy-3-oxobutyl phosphate from D-ribulose 5-phosphate: step 1/1. It functions in the pathway cofactor biosynthesis; riboflavin biosynthesis; 5-amino-6-(D-ribitylamino)uracil from GTP: step 1/4. Its function is as follows. Catalyzes the conversion of D-ribulose 5-phosphate to formate and 3,4-dihydroxy-2-butanone 4-phosphate. Catalyzes the conversion of GTP to 2,5-diamino-6-ribosylamino-4(3H)-pyrimidinone 5'-phosphate (DARP), formate and pyrophosphate. This chain is Riboflavin biosynthesis protein RibBA, found in Bacillus cereus (strain AH187).